The primary structure comprises 55 residues: Cortexin domain containing 2 (55 aa).

Residues 16–36 (FAIAFVVLLFLFLIVMIFRCA) traverse the membrane as a helical segment.

The protein resides in the membrane. This is Cortexin domain containing 2 from Homo sapiens (Human).